Reading from the N-terminus, the 389-residue chain is Large envelope protein (389 aa).

The residue at position 1 (Met1) is an N-acetylmethionine. A lipid anchor (N-myristoyl glycine; by host) is attached at Gly2. Residues 2 to 108 (GQNLSTSNPL…PPLRNTHPQA (107 aa)) are pre-S1. Positions 2–163 (GQNLSTSNPL…FSRIGDPALN (162 aa)) are pre-S. The Virion surface; in external conformation portion of the chain corresponds to 2 to 170 (GQNLSTSNPL…ALNMENITSG (169 aa)). Residues 2–242 (GQNLSTSNPL…PGYRWMCLRR (241 aa)) are Intravirion; in internal conformation-facing. A glycan (O-linked (GalNAc...) threonine) is linked at Asn37. The interval 76 to 103 (TLPANPPPASTNRQSGRQPTPLSPPLRN) is disordered. Residues 85–95 (STNRQSGRQPT) are compositionally biased toward polar residues. Positions 109 to 163 (MQWNSTTFHQTLQDPRVRGLYFPAGGSSSGTVNPVLTTASPLSSIFSRIGDPALN) are pre-S2. A helical membrane pass occupies residues 171–191 (FLGPLLVLQAGFFLLTRILTI). The Intravirion; in external conformation segment spans residues 192 to 242 (PQSLDSWWTSLNFLGGTTVCLGQNSQSPTSNHSPTSCPPTCPGYRWMCLRR). A helical membrane pass occupies residues 243 to 263 (FIIFLFILLLCLIFLLVLLDY). Topologically, residues 264 to 337 (QGMLPVCPLI…WASARFSWLS (74 aa)) are virion surface. N-linked (GlcNAc...) asparagine; by host glycosylation is present at Asn309. The helical transmembrane segment at 338-358 (LLVPFVQWFVGLSPTVWLSVI) threads the bilayer. The Intravirion segment spans residues 359-364 (WMMWYW). Residues 365 to 387 (GPSLYSILSPFLPLLPIFFCLWV) form a helical membrane-spanning segment. The Virion surface segment spans residues 388-389 (YI).

This sequence belongs to the orthohepadnavirus major surface antigen family. In terms of assembly, in its internal form (Li-HBsAg), interacts with the capsid protein and with the isoform S. Interacts with host chaperone CANX. Associates with host chaperone CANX through its pre-S2 N glycan; this association may be essential for isoform M proper secretion. As to quaternary structure, interacts with isoform L. Interacts with the antigens of satellite virus HDV (HDVAgs); this interaction is required for encapsidation of HDV genomic RNA. Post-translationally, isoform M is N-terminally acetylated by host at a ratio of 90%, and N-glycosylated by host at the pre-S2 region. In terms of processing, myristoylated.

The protein resides in the virion membrane. The large envelope protein exists in two topological conformations, one which is termed 'external' or Le-HBsAg and the other 'internal' or Li-HBsAg. In its external conformation the protein attaches the virus to cell receptors and thereby initiating infection. This interaction determines the species specificity and liver tropism. This attachment induces virion internalization predominantly through caveolin-mediated endocytosis. The large envelope protein also assures fusion between virion membrane and endosomal membrane. In its internal conformation the protein plays a role in virion morphogenesis and mediates the contact with the nucleocapsid like a matrix protein. Functionally, the middle envelope protein plays an important role in the budding of the virion. It is involved in the induction of budding in a nucleocapsid independent way. In this process the majority of envelope proteins bud to form subviral lipoprotein particles of 22 nm of diameter that do not contain a nucleocapsid. The protein is Large envelope protein of Homo sapiens (Human).